A 296-amino-acid chain; its full sequence is Ribosomal protein L11 methyltransferase (296 aa).

Residues T151, G172, D194, and N233 each contribute to the S-adenosyl-L-methionine site.

Belongs to the methyltransferase superfamily. PrmA family.

It is found in the cytoplasm. It catalyses the reaction L-lysyl-[protein] + 3 S-adenosyl-L-methionine = N(6),N(6),N(6)-trimethyl-L-lysyl-[protein] + 3 S-adenosyl-L-homocysteine + 3 H(+). Methylates ribosomal protein L11. In Thiobacillus denitrificans (strain ATCC 25259 / T1), this protein is Ribosomal protein L11 methyltransferase.